Consider the following 346-residue polypeptide: Very-long-chain 3-oxoacyl-CoA reductase (346 aa).

A helical transmembrane segment spans residues 26–46 (GASALLAAGSLFVVSRALVFV). Positions 71, 126, 134, 153, 220, 224, 253, and 255 each coordinate NADP(+). Catalysis depends on Y220, which acts as the Proton donor. K224 (lowers pKa of active site Tyr) is an active-site residue.

It belongs to the short-chain dehydrogenases/reductases (SDR) family.

It localises to the endoplasmic reticulum membrane. The enzyme catalyses a very-long-chain (3R)-3-hydroxyacyl-CoA + NADP(+) = a very-long-chain 3-oxoacyl-CoA + NADPH + H(+). It participates in lipid metabolism; fatty acid biosynthesis. Component of the microsomal membrane bound fatty acid elongation system, which produces the 26-carbon very long-chain fatty acids (VLCFA) from palmitate. Catalyzes the reduction of the 3-ketoacyl-CoA intermediate that is formed in each cycle of fatty acid elongation. VLCFAs serve as precursors for ceramide and sphingolipids. The protein is Very-long-chain 3-oxoacyl-CoA reductase of Aspergillus niger (strain ATCC MYA-4892 / CBS 513.88 / FGSC A1513).